Here is a 316-residue protein sequence, read N- to C-terminus: Pantothenate kinase (316 aa).

95–102 is a binding site for ATP; sequence GSVAVGKS.

This sequence belongs to the prokaryotic pantothenate kinase family.

It localises to the cytoplasm. It catalyses the reaction (R)-pantothenate + ATP = (R)-4'-phosphopantothenate + ADP + H(+). It participates in cofactor biosynthesis; coenzyme A biosynthesis; CoA from (R)-pantothenate: step 1/5. In Hamiltonella defensa subsp. Acyrthosiphon pisum (strain 5AT), this protein is Pantothenate kinase.